The following is a 202-amino-acid chain: Ras-related protein Rab-2B (202 aa).

31 to 38 serves as a coordination point for GTP; that stretch reads GDSAVGKS. The Effector region motif lies at 53-61; it reads SDFTIGVEF. Residues 79-83 and 137-140 each bind GTP; these read DTAGQ and NKAD.

It belongs to the small GTPase superfamily. Rab family. In terms of processing, this sequence lacks the C-terminal cysteine motifs subject to isoprenylation in other Rab proteins.

The protein is Ras-related protein Rab-2B (rab2B) of Dictyostelium discoideum (Social amoeba).